Reading from the N-terminus, the 88-residue chain is Beta-insect excitatory toxin 1 (88 aa).

Positions 1–18 (MKFLLLFLVVLPIMGVFG) are cleaved as a signal peptide. Residues 20-83 (KNGYAVDSSG…ISDTRKSYCD (64 aa)) enclose the LCN-type CS-alpha/beta domain. 4 cysteine pairs are disulfide-bonded: C34–C55, C40–C60, C44–C62, and C56–C82.

The protein belongs to the long (4 C-C) scorpion toxin superfamily. Sodium channel inhibitor family. Beta subfamily. As to expression, expressed by the venom gland.

Its subcellular location is the secreted. Functionally, excitatory insect beta-toxins induce a spastic paralysis. They bind voltage-independently at site-4 of sodium channels (Nav) and shift the voltage of activation toward more negative potentials thereby affecting sodium channel activation and promoting spontaneous and repetitive firing. This toxin is active only on insects. This is Beta-insect excitatory toxin 1 from Androctonus australis (Sahara scorpion).